The primary structure comprises 152 residues: Ribosome maturation factor RimP (152 aa).

This sequence belongs to the RimP family.

Its subcellular location is the cytoplasm. Its function is as follows. Required for maturation of 30S ribosomal subunits. In Porphyromonas gingivalis (strain ATCC 33277 / DSM 20709 / CIP 103683 / JCM 12257 / NCTC 11834 / 2561), this protein is Ribosome maturation factor RimP.